The following is a 362-amino-acid chain: S-adenosylmethionine-dependent nucleotide dehydratase RSAD2 (362 aa).

The interval 49–71 (QQLQGKTEAGEPPRAQEDSHLPT) is disordered. Residues 56-68 (EAGEPPRAQEDSH) are compositionally biased toward basic and acidic residues. Positions 70 to 290 (PTTPTSVNYH…LDRHKDVSCL (221 aa)) constitute a Radical SAM core domain. 3 residues coordinate [4Fe-4S] cluster: Cys-84, Cys-88, and Cys-91. Lys-198 carries the post-translational modification N6-acetyllysine. Lys-207 participates in a covalent cross-link: Glycyl lysine isopeptide (Lys-Gly) (interchain with G-Cter in ubiquitin).

Belongs to the radical SAM superfamily. RSAD2 family. In terms of assembly, homodimer. Interacts with IRAK1 and TRAF6. Interacts with FPPS. Interacts with HADHB. Interacts (via C-terminus) with VAPA/VAP33 (via C-terminus). The cofactor is [4Fe-4S] cluster. Acetylated by HAT1. HAT1-mediated acetylation of Lys-198 in turn recruits UBE4A that stimulates RSAD2 polyubiquitination leading to proteasomal degradation. Post-translationally, 'Lys-6'-linked polyubiquitination at Lys-207 leads to RSAD2 protein degradation.

The protein localises to the endoplasmic reticulum membrane. The protein resides in the golgi apparatus. It is found in the endoplasmic reticulum. Its subcellular location is the lipid droplet. It localises to the mitochondrion. The protein localises to the mitochondrion inner membrane. The protein resides in the mitochondrion outer membrane. The enzyme catalyses CTP + AH2 + S-adenosyl-L-methionine = 3'-deoxy-3',4'-didehydro-CTP + 5'-deoxyadenosine + L-methionine + A + H2O + H(+). With respect to regulation, IRAK1 and TRAF6 synergistically activate RSAD2 increasing its activity with CTP as substrate about 10-fold. Its function is as follows. Interferon-inducible antiviral protein which plays a major role in the cell antiviral state induced by type I and type II interferon. Catalyzes the conversion of cytidine triphosphate (CTP) to 3'-deoxy-3',4'-didehydro-CTP (ddhCTP) via a SAM-dependent radical mechanism. In turn, ddhCTP acts as a chain terminator for the RNA-dependent RNA polymerases from multiple viruses and directly inhibits viral replication. Therefore, inhibits a wide range of DNA and RNA viruses. Also promotes TLR7 and TLR9-dependent production of IFN-beta production in plasmacytoid dendritic cells (pDCs) by facilitating 'Lys-63'-linked ubiquitination of IRAK1 by TRAF6. Plays a role in CD4+ T-cells activation and differentiation. Facilitates T-cell receptor (TCR)-mediated GATA3 activation and optimal T-helper 2 (Th2) cytokine production by modulating NFKB1 and JUNB activities. Can inhibit secretion of soluble proteins. The polypeptide is S-adenosylmethionine-dependent nucleotide dehydratase RSAD2 (Sus scrofa (Pig)).